Here is a 344-residue protein sequence, read N- to C-terminus: Protein pelota homolog (344 aa).

Belongs to the eukaryotic release factor 1 family. Pelota subfamily. As to quaternary structure, monomer. Requires a divalent metal cation as cofactor.

The protein resides in the cytoplasm. May function in recognizing stalled ribosomes, interact with stem-loop structures in stalled mRNA molecules, and effect endonucleolytic cleavage of the mRNA. May play a role in the release non-functional ribosomes and degradation of damaged mRNAs. Has endoribonuclease activity. The sequence is that of Protein pelota homolog from Saccharolobus islandicus (strain M.16.27) (Sulfolobus islandicus).